Reading from the N-terminus, the 446-residue chain is Probable cytosolic iron-sulfur protein assembly protein 1 (446 aa).

WD repeat units follow at residues 17–59, 63–106, 143–182, 192–241, 247–291, 330–368, and 398–446; these read AFKP…AHSN, GHTR…PLEE, GHEN…EGDD, EHDG…EWAC, GHSS…PEAS, VHTR…NPST, and GHGP…SIEL. Over residues 106–128 the composition is skewed to basic and acidic residues; the sequence is EGTKKGESTEIDVTRRRNNNDSD. A disordered region spans residues 106-133; the sequence is EGTKKGESTEIDVTRRRNNNDSDKDNDD.

The protein belongs to the WD repeat CIA1 family.

Functionally, essential component of the cytosolic iron-sulfur (Fe/S) protein assembly machinery. Required for the maturation of extramitochondrial Fe/S proteins. This chain is Probable cytosolic iron-sulfur protein assembly protein 1, found in Pyricularia oryzae (strain 70-15 / ATCC MYA-4617 / FGSC 8958) (Rice blast fungus).